A 268-amino-acid polypeptide reads, in one-letter code: Phosphatidylglycerol--prolipoprotein diacylglyceryl transferase (268 aa).

Transmembrane regions (helical) follow at residues 27 to 47 (PALR…MWLL), 66 to 86 (LLFY…VLFY), 104 to 124 (GGMS…YITW), 130 to 150 (FFAV…AGRI), 181 to 201 (PSQL…LYWF), 208 to 228 (VGAV…IVET), and 242 to 262 (LMTM…YLIL). Arg149 is a binding site for a 1,2-diacyl-sn-glycero-3-phospho-(1'-sn-glycerol).

Belongs to the Lgt family.

Its subcellular location is the cell inner membrane. The enzyme catalyses L-cysteinyl-[prolipoprotein] + a 1,2-diacyl-sn-glycero-3-phospho-(1'-sn-glycerol) = an S-1,2-diacyl-sn-glyceryl-L-cysteinyl-[prolipoprotein] + sn-glycerol 1-phosphate + H(+). The protein operates within protein modification; lipoprotein biosynthesis (diacylglyceryl transfer). Its function is as follows. Catalyzes the transfer of the diacylglyceryl group from phosphatidylglycerol to the sulfhydryl group of the N-terminal cysteine of a prolipoprotein, the first step in the formation of mature lipoproteins. The chain is Phosphatidylglycerol--prolipoprotein diacylglyceryl transferase from Shewanella oneidensis (strain ATCC 700550 / JCM 31522 / CIP 106686 / LMG 19005 / NCIMB 14063 / MR-1).